The following is a 237-amino-acid chain: Undecaprenyl-diphosphatase (237 aa).

A run of 7 helical transmembrane segments spans residues 38 to 58 (QTAV…FDGI), 65 to 85 (WRII…GVLF), 92 to 112 (LFSS…ILMF), 126 to 146 (MSFL…FPGI), 166 to 186 (ALQY…ILGL), 191 to 211 (ITIL…YVLS), and 217 to 237 (GKIW…YLVG).

Belongs to the UppP family.

It is found in the cell inner membrane. It catalyses the reaction di-trans,octa-cis-undecaprenyl diphosphate + H2O = di-trans,octa-cis-undecaprenyl phosphate + phosphate + H(+). Catalyzes the dephosphorylation of undecaprenyl diphosphate (UPP). Confers resistance to bacitracin. The polypeptide is Undecaprenyl-diphosphatase (Thermotoga petrophila (strain ATCC BAA-488 / DSM 13995 / JCM 10881 / RKU-1)).